The sequence spans 315 residues: Small ribosomal subunit biogenesis GTPase RsgA (315 aa).

The 162-residue stretch at 80 to 241 (LSKQTHIIAS…IIDTPGIKGF (162 aa)) folds into the CP-type G domain. Residues 129-132 (NKVD) and 183-191 (GHSGTGKST) each bind GTP. Zn(2+)-binding residues include Cys-265, Cys-270, His-272, and Cys-278.

This sequence belongs to the TRAFAC class YlqF/YawG GTPase family. RsgA subfamily. In terms of assembly, monomer. Associates with 30S ribosomal subunit, binds 16S rRNA. Zn(2+) is required as a cofactor.

The protein resides in the cytoplasm. In terms of biological role, one of several proteins that assist in the late maturation steps of the functional core of the 30S ribosomal subunit. Helps release RbfA from mature subunits. May play a role in the assembly of ribosomal proteins into the subunit. Circularly permuted GTPase that catalyzes slow GTP hydrolysis, GTPase activity is stimulated by the 30S ribosomal subunit. This chain is Small ribosomal subunit biogenesis GTPase RsgA, found in Christiangramia forsetii (strain DSM 17595 / CGMCC 1.15422 / KT0803) (Gramella forsetii).